The primary structure comprises 216 residues: Large ribosomal subunit protein bL21 (216 aa).

The protein belongs to the bacterial ribosomal protein bL21 family. In terms of assembly, part of the 50S ribosomal subunit. Contacts protein L20.

In terms of biological role, this protein binds to 23S rRNA in the presence of protein L20. This is Large ribosomal subunit protein bL21 from Roseobacter denitrificans (strain ATCC 33942 / OCh 114) (Erythrobacter sp. (strain OCh 114)).